The primary structure comprises 234 residues: Sugar fermentation stimulation protein homolog (234 aa).

Belongs to the SfsA family.

The polypeptide is Sugar fermentation stimulation protein homolog (Shewanella halifaxensis (strain HAW-EB4)).